Consider the following 725-residue polypeptide: Glutamine-dependent NAD(+) synthetase (725 aa).

A CN hydrolase domain is found at 5-275; the sequence is VTVATCALNQ…VEVLTATLDL (271 aa). Glu45 functions as the Proton acceptor; for glutaminase activity in the catalytic mechanism. The active-site For glutaminase activity is the Lys114. Residue Cys175 is the Nucleophile; for glutaminase activity of the active site. The interval 325–706 is ligase; it reads YHRPEEEISL…KASQTREEQV (382 aa). Residue 355–362 coordinates ATP; sequence PLSGGVDS. Ser357 is an active-site residue.

It in the C-terminal section; belongs to the NAD synthetase family. Homohexamer. In terms of tissue distribution, highly expressed in small intestine, kidney, liver and testis. Weakly expressed in skeletal muscle, spleen, lung, heart and brain.

The enzyme catalyses deamido-NAD(+) + L-glutamine + ATP + H2O = L-glutamate + AMP + diphosphate + NAD(+) + H(+). It functions in the pathway cofactor biosynthesis; NAD(+) biosynthesis; NAD(+) from deamido-NAD(+) (L-Gln route): step 1/1. In terms of biological role, catalyzes the final step of the nicotinamide adenine dinucleotide (NAD) de novo synthesis pathway, the ATP-dependent amidation of deamido-NAD using L-glutamine as a nitrogen source. The sequence is that of Glutamine-dependent NAD(+) synthetase (Nadsyn1) from Mus musculus (Mouse).